A 193-amino-acid chain; its full sequence is GTP cyclohydrolase 1 (193 aa).

Zn(2+)-binding residues include C83, H86, and C154.

Belongs to the GTP cyclohydrolase I family. As to quaternary structure, homomer.

It carries out the reaction GTP + H2O = 7,8-dihydroneopterin 3'-triphosphate + formate + H(+). Its pathway is cofactor biosynthesis; 7,8-dihydroneopterin triphosphate biosynthesis; 7,8-dihydroneopterin triphosphate from GTP: step 1/1. The sequence is that of GTP cyclohydrolase 1 from Porphyromonas gingivalis (strain ATCC 33277 / DSM 20709 / CIP 103683 / JCM 12257 / NCTC 11834 / 2561).